A 349-amino-acid polypeptide reads, in one-letter code: UDP-3-O-acylglucosamine N-acyltransferase (349 aa).

Residue His246 is the Proton acceptor of the active site.

The protein belongs to the transferase hexapeptide repeat family. LpxD subfamily. As to quaternary structure, homotrimer.

It carries out the reaction a UDP-3-O-[(3R)-3-hydroxyacyl]-alpha-D-glucosamine + a (3R)-hydroxyacyl-[ACP] = a UDP-2-N,3-O-bis[(3R)-3-hydroxyacyl]-alpha-D-glucosamine + holo-[ACP] + H(+). It functions in the pathway bacterial outer membrane biogenesis; LPS lipid A biosynthesis. Functionally, catalyzes the N-acylation of UDP-3-O-acylglucosamine using 3-hydroxyacyl-ACP as the acyl donor. Is involved in the biosynthesis of lipid A, a phosphorylated glycolipid that anchors the lipopolysaccharide to the outer membrane of the cell. The polypeptide is UDP-3-O-acylglucosamine N-acyltransferase (Protochlamydia amoebophila (strain UWE25)).